The primary structure comprises 209 residues: Large ribosomal subunit protein uL3 (209 aa).

Glutamine 150 bears the N5-methylglutamine mark.

This sequence belongs to the universal ribosomal protein uL3 family. Part of the 50S ribosomal subunit. Forms a cluster with proteins L14 and L19. Post-translationally, methylated by PrmB.

In terms of biological role, one of the primary rRNA binding proteins, it binds directly near the 3'-end of the 23S rRNA, where it nucleates assembly of the 50S subunit. This is Large ribosomal subunit protein uL3 from Pasteurella multocida (strain Pm70).